Reading from the N-terminus, the 212-residue chain is Riboflavin kinase (212 aa).

The segment at 1–83 (MTELYCERKT…NLLRYFDIAS (83 aa)) is unknown. Positions 84 to 212 (IKLVGRVVTG…GDRVELEVYL (129 aa)) are riboflavin kinase. 93–98 (GLGEGA) is a binding site for CDP. The Mg(2+) site is built by threonine 122 and asparagine 124. Residues threonine 179 and glutamate 187 each contribute to the FMN site. 192–195 (VRVR) is a CDP binding site.

It belongs to the archaeal riboflavin kinase family. The cofactor is Mg(2+).

It catalyses the reaction riboflavin + CTP = CDP + FMN + H(+). It participates in cofactor biosynthesis; FMN biosynthesis; FMN from riboflavin (CTP route): step 1/1. In terms of biological role, catalyzes the CTP-dependent phosphorylation of riboflavin (vitamin B2) to form flavin mononucleotide (FMN). This is Riboflavin kinase (ribK) from Pyrobaculum calidifontis (strain DSM 21063 / JCM 11548 / VA1).